The chain runs to 82 residues: Cytochrome b-c1 complex subunit 8 (82 aa).

Residues 1 to 39 (MGREFGNLTRMRHVISYSLSPFEQRAHPHVFTKGIPNVL) lie on the Mitochondrial matrix side of the membrane. The residue at position 16 (serine 16) is a Phosphoserine. The residue at position 33 (lysine 33) is an N6-acetyllysine; alternate. Lysine 33 is subject to N6-succinyllysine; alternate. A helical membrane pass occupies residues 40-68 (RRFRESFFRVAPQFVVFYLIYTWGTEEFE). The Mitochondrial intermembrane portion of the chain corresponds to 69 to 82 (RSKRKNPAAYENDK).

The protein belongs to the UQCRQ/QCR8 family. As to quaternary structure, component of the ubiquinol-cytochrome c oxidoreductase (cytochrome b-c1 complex, complex III, CIII), a multisubunit enzyme composed of 11 subunits. The complex is composed of 3 respiratory subunits cytochrome b, cytochrome c1 and Rieske protein UQCRFS1, 2 core protein subunits UQCRC1/QCR1 and UQCRC2/QCR2, and 6 low-molecular weight protein subunits UQCRH/QCR6, UQCRB/QCR7, UQCRQ/QCR8, UQCR10/QCR9, UQCR11/QCR10 and subunit 9, the cleavage product of Rieske protein UQCRFS1. The complex exists as an obligatory dimer and forms supercomplexes (SCs) in the inner mitochondrial membrane with NADH-ubiquinone oxidoreductase (complex I, CI) and cytochrome c oxidase (complex IV, CIV), resulting in different assemblies (supercomplex SCI(1)III(2)IV(1) and megacomplex MCI(2)III(2)IV(2)). Interacts with UQCC6.

It localises to the mitochondrion inner membrane. Functionally, component of the ubiquinol-cytochrome c oxidoreductase, a multisubunit transmembrane complex that is part of the mitochondrial electron transport chain which drives oxidative phosphorylation. The respiratory chain contains 3 multisubunit complexes succinate dehydrogenase (complex II, CII), ubiquinol-cytochrome c oxidoreductase (cytochrome b-c1 complex, complex III, CIII) and cytochrome c oxidase (complex IV, CIV), that cooperate to transfer electrons derived from NADH and succinate to molecular oxygen, creating an electrochemical gradient over the inner membrane that drives transmembrane transport and the ATP synthase. The cytochrome b-c1 complex catalyzes electron transfer from ubiquinol to cytochrome c, linking this redox reaction to translocation of protons across the mitochondrial inner membrane, with protons being carried across the membrane as hydrogens on the quinol. In the process called Q cycle, 2 protons are consumed from the matrix, 4 protons are released into the intermembrane space and 2 electrons are passed to cytochrome c. The sequence is that of Cytochrome b-c1 complex subunit 8 (UQCRQ) from Pongo abelii (Sumatran orangutan).